The chain runs to 316 residues: D-alanine--D-alanine ligase (316 aa).

The 200-residue stretch at K104–A303 folds into the ATP-grasp domain. P130–T185 lines the ATP pocket. Residues D257, E270, and N272 each contribute to the Mg(2+) site.

The protein belongs to the D-alanine--D-alanine ligase family. Mg(2+) is required as a cofactor. The cofactor is Mn(2+).

It localises to the cytoplasm. It carries out the reaction 2 D-alanine + ATP = D-alanyl-D-alanine + ADP + phosphate + H(+). Its pathway is cell wall biogenesis; peptidoglycan biosynthesis. Functionally, cell wall formation. The sequence is that of D-alanine--D-alanine ligase from Bordetella bronchiseptica (strain ATCC BAA-588 / NCTC 13252 / RB50) (Alcaligenes bronchisepticus).